Here is a 20-residue protein sequence, read N- to C-terminus: Apidaecin 2+ (20 aa).

Positions 1 to 13 (GKPNKPRPAPIKP) are enriched in pro residues. A disordered region spans residues 1 to 20 (GKPNKPRPAPIKPRPPHPRL).

The protein resides in the secreted. Antimicrobial peptide active against many Gram-negative enterobacterial and plant-associated bacterial species. Not active against other bacterial species like H.pylori, P.mirabilis, B.pertussis or N.gonorrhoeae. This Pimpla disparis (Parasitic wasp) protein is Apidaecin 2+.